Here is a 228-residue protein sequence, read N- to C-terminus: HTH-type transcriptional regulator TfdT (228 aa).

One can recognise an HTH lysR-type domain in the interval Met1 to Thr58. Residues Phe18 to Gln37 constitute a DNA-binding region (H-T-H motif).

Belongs to the LysR transcriptional regulatory family.

The protein resides in the cytoplasm. In terms of biological role, does not seem to be involved in the regulation of 3-chlorocatechol degradation. Does not activate the expression of its presumed target operon, tfdCDEF. The polypeptide is HTH-type transcriptional regulator TfdT (tfdT) (Cupriavidus pinatubonensis (strain JMP 134 / LMG 1197) (Cupriavidus necator (strain JMP 134))).